The following is a 170-amino-acid chain: UPF0316 protein CLJ_B0679 (170 aa).

Helical transmembrane passes span 1–21 (MLSY…LMTI) and 36–56 (IIGF…LSGI).

This sequence belongs to the UPF0316 family.

The protein resides in the cell membrane. The protein is UPF0316 protein CLJ_B0679 of Clostridium botulinum (strain 657 / Type Ba4).